We begin with the raw amino-acid sequence, 80 residues long: Large ribosomal subunit protein bL31B (80 aa).

Belongs to the bacterial ribosomal protein bL31 family. Type B subfamily. In terms of assembly, part of the 50S ribosomal subunit.

This is Large ribosomal subunit protein bL31B from Xylella fastidiosa (strain 9a5c).